Here is a 475-residue protein sequence, read N- to C-terminus: Ribulose bisphosphate carboxylase large chain (475 aa).

Residues 1–2 (MS) constitute a propeptide that is removed on maturation. Pro-3 is modified (N-acetylproline). Residue Lys-14 is modified to N6,N6,N6-trimethyllysine. Positions 123 and 173 each coordinate substrate. Lys-175 functions as the Proton acceptor in the catalytic mechanism. A substrate-binding site is contributed by Lys-177. Residues Lys-201, Asp-203, and Glu-204 each coordinate Mg(2+). Lys-201 carries the N6-carboxylysine modification. His-294 acts as the Proton acceptor in catalysis. Residues Arg-295, His-327, and Ser-379 each contribute to the substrate site.

This sequence belongs to the RuBisCO large chain family. Type I subfamily. In terms of assembly, heterohexadecamer of 8 large chains and 8 small chains; disulfide-linked. The disulfide link is formed within the large subunit homodimers. The cofactor is Mg(2+). The disulfide bond which can form in the large chain dimeric partners within the hexadecamer appears to be associated with oxidative stress and protein turnover.

It localises to the plastid. The protein resides in the chloroplast. It carries out the reaction 2 (2R)-3-phosphoglycerate + 2 H(+) = D-ribulose 1,5-bisphosphate + CO2 + H2O. The enzyme catalyses D-ribulose 1,5-bisphosphate + O2 = 2-phosphoglycolate + (2R)-3-phosphoglycerate + 2 H(+). Functionally, ruBisCO catalyzes two reactions: the carboxylation of D-ribulose 1,5-bisphosphate, the primary event in carbon dioxide fixation, as well as the oxidative fragmentation of the pentose substrate in the photorespiration process. Both reactions occur simultaneously and in competition at the same active site. This chain is Ribulose bisphosphate carboxylase large chain (rbcL), found in Marchantia polymorpha (Common liverwort).